The primary structure comprises 231 residues: Type 3 secretion system stator protein (231 aa).

The core secretion machinery of the T3SS is composed of approximately 20 different proteins, including cytoplasmic components, a base, an export apparatus and a needle. This subunit is part of the cytosolic complex. Interacts directly with Spa47/SctN (T3SS ATPase) and Spa33/SctQ (the major sorting platform component). Homodimer in solution.

Its subcellular location is the cytoplasm. In terms of biological role, component of the type III secretion system (T3SS), also called injectisome, which is used to inject bacterial effector proteins into eukaryotic host cells. Acts as a regulator of the Spa47/SctN ATPase activity. It down-regulates the ATPase activity of the oligomeric Spa47/SctN, while it up-regulates the activity of the monomeric form. Important for translocation of MxiH/SctF, the major needle component. This Shigella flexneri protein is Type 3 secretion system stator protein.